The following is a 346-amino-acid chain: Protein RecA (346 aa).

Position 65 to 72 (Gly-65 to Thr-72) interacts with ATP.

This sequence belongs to the RecA family.

Its subcellular location is the cytoplasm. Functionally, can catalyze the hydrolysis of ATP in the presence of single-stranded DNA, the ATP-dependent uptake of single-stranded DNA by duplex DNA, and the ATP-dependent hybridization of homologous single-stranded DNAs. It interacts with LexA causing its activation and leading to its autocatalytic cleavage. The chain is Protein RecA from Enterococcus hirae (strain ATCC 9790 / DSM 20160 / JCM 8729 / LMG 6399 / NBRC 3181 / NCIMB 6459 / NCDO 1258 / NCTC 12367 / WDCM 00089 / R).